Consider the following 67-residue polypeptide: Beta-defensin 9 (67 aa).

The first 24 residues, 1 to 24 (MRTLCSLLLICCLLFSYTTPAANS), serve as a signal peptide directing secretion. Intrachain disulfides connect Cys-34-Cys-62, Cys-41-Cys-55, and Cys-45-Cys-63.

This sequence belongs to the beta-defensin family. As to expression, weakly expressed in adult and neonatal brain.

It is found in the secreted. Has antibacterial activity. In Mus musculus (Mouse), this protein is Beta-defensin 9 (Defb9).